Here is a 400-residue protein sequence, read N- to C-terminus: S-adenosylmethionine synthase (400 aa).

137–142 (GEGSGD) provides a ligand contact to ATP.

This sequence belongs to the AdoMet synthase 2 family. Mg(2+) is required as a cofactor.

It carries out the reaction L-methionine + ATP + H2O = S-adenosyl-L-methionine + phosphate + diphosphate. Its pathway is amino-acid biosynthesis; S-adenosyl-L-methionine biosynthesis; S-adenosyl-L-methionine from L-methionine: step 1/1. Catalyzes the formation of S-adenosylmethionine from methionine and ATP. The chain is S-adenosylmethionine synthase from Haloarcula marismortui (strain ATCC 43049 / DSM 3752 / JCM 8966 / VKM B-1809) (Halobacterium marismortui).